The sequence spans 77 residues: Large ribosomal subunit protein bL28 (77 aa).

The protein belongs to the bacterial ribosomal protein bL28 family.

The protein is Large ribosomal subunit protein bL28 of Delftia acidovorans (strain DSM 14801 / SPH-1).